The sequence spans 435 residues: Serine--tRNA ligase (435 aa).

237–239 lines the L-serine pocket; it reads TAE. 268–270 contributes to the ATP binding site; sequence RSE. An L-serine-binding site is contributed by glutamate 291. 355–358 contributes to the ATP binding site; that stretch reads EISS. Serine 390 contributes to the L-serine binding site.

The protein belongs to the class-II aminoacyl-tRNA synthetase family. Type-1 seryl-tRNA synthetase subfamily. Homodimer. The tRNA molecule binds across the dimer.

The protein resides in the cytoplasm. The enzyme catalyses tRNA(Ser) + L-serine + ATP = L-seryl-tRNA(Ser) + AMP + diphosphate + H(+). It carries out the reaction tRNA(Sec) + L-serine + ATP = L-seryl-tRNA(Sec) + AMP + diphosphate + H(+). Its pathway is aminoacyl-tRNA biosynthesis; selenocysteinyl-tRNA(Sec) biosynthesis; L-seryl-tRNA(Sec) from L-serine and tRNA(Sec): step 1/1. Functionally, catalyzes the attachment of serine to tRNA(Ser). Is also able to aminoacylate tRNA(Sec) with serine, to form the misacylated tRNA L-seryl-tRNA(Sec), which will be further converted into selenocysteinyl-tRNA(Sec). This chain is Serine--tRNA ligase, found in Lactobacillus delbrueckii subsp. bulgaricus (strain ATCC BAA-365 / Lb-18).